A 599-amino-acid polypeptide reads, in one-letter code: Elongation factor 4 (599 aa).

The tr-type G domain maps to 2–184 (NYKRNFSIIA…RLVRDIPAPK (183 aa)). GTP contacts are provided by residues 14–19 (DHGKST) and 131–134 (NKID).

It belongs to the TRAFAC class translation factor GTPase superfamily. Classic translation factor GTPase family. LepA subfamily.

The protein resides in the cell membrane. It carries out the reaction GTP + H2O = GDP + phosphate + H(+). In terms of biological role, required for accurate and efficient protein synthesis under certain stress conditions. May act as a fidelity factor of the translation reaction, by catalyzing a one-codon backward translocation of tRNAs on improperly translocated ribosomes. Back-translocation proceeds from a post-translocation (POST) complex to a pre-translocation (PRE) complex, thus giving elongation factor G a second chance to translocate the tRNAs correctly. Binds to ribosomes in a GTP-dependent manner. The chain is Elongation factor 4 from Hamiltonella defensa subsp. Acyrthosiphon pisum (strain 5AT).